The chain runs to 383 residues: MQTWQLPEHIADVLPTNARQLESAREQLLALFRVHGYELVQPPLMEYAHSLLTHIDAGLSLKTILVTDRLSGRQLGIRADITPQVARIDAHLLSANQGINRLCYAGPVLHAQPDGLLNMREPLQAGAEMYGFADIRGDIELIDLMLKSMKIADMGKVLLSLGHIGIFRALSDAAHLDAGQSATLLALMQDKDTGAVEAQVKAWKLDGMWAKAFSLLPRLYGGREVLSDARGRLPDLSAVGGALGELQAVCDAFPDCEIHIDLSELRVDNYHTGLLYAAYAADFHDAVARGGRYDGLGGYFGRARPATGFSFDLRSFIGRLPAIERQPAVLVDAEDAEAAHEAVEALREQGQCVVIDYGIGHNVSEELAGRLKKTDGVWQVVKR.

It belongs to the class-II aminoacyl-tRNA synthetase family. HisZ subfamily. In terms of assembly, heteromultimer composed of HisG and HisZ subunits.

Its subcellular location is the cytoplasm. It functions in the pathway amino-acid biosynthesis; L-histidine biosynthesis; L-histidine from 5-phospho-alpha-D-ribose 1-diphosphate: step 1/9. Functionally, required for the first step of histidine biosynthesis. May allow the feedback regulation of ATP phosphoribosyltransferase activity by histidine. This Neisseria meningitidis serogroup B (strain ATCC BAA-335 / MC58) protein is ATP phosphoribosyltransferase regulatory subunit (hisZ).